Consider the following 617-residue polypeptide: Chaperone protein DnaK (617 aa).

At threonine 175 the chain carries Phosphothreonine; by autocatalysis. Positions 578 to 592 (AGAEAQQGAQGTQGA) are enriched in low complexity. Residues 578-617 (AGAEAQQGAQGTQGADMGGNAQGKDDDNVVDADFKVEDDK) form a disordered region. Residues 600-617 (GKDDDNVVDADFKVEDDK) show a composition bias toward basic and acidic residues.

The protein belongs to the heat shock protein 70 family.

In terms of biological role, acts as a chaperone. In Clostridium novyi (strain NT), this protein is Chaperone protein DnaK.